Here is a 236-residue protein sequence, read N- to C-terminus: uncharacterized protein (236 aa).

This is an uncharacterized protein from Escherichia coli O157:H7.